We begin with the raw amino-acid sequence, 524 residues long: B3 domain-containing protein Os07g0183700 (524 aa).

Disordered regions lie at residues 94–152 and 191–232; these read DGEG…TSVS and PLQP…FQTQ. Residues 100–109 show a composition bias toward pro residues; sequence CAPPPSPIPA. 2 stretches are compositionally biased toward low complexity: residues 110-124 and 200-232; these read GPASSTVSAASSAPA and AAAAAGSPSATTPEPGHGEATPTTSSSAQFQTQ. The TF-B3 DNA-binding region spans 336–434; it reads SFVKPLTYTD…EMFMAVRRTR (99 aa).

It localises to the nucleus. In Oryza sativa subsp. japonica (Rice), this protein is B3 domain-containing protein Os07g0183700.